Here is a 198-residue protein sequence, read N- to C-terminus: Protein hunchback (198 aa).

Disordered regions lie at residues 16–117 and 152–198; these read SHHH…PMQS and NDKL…KYMA. Positions 17–31 are enriched in basic residues; sequence HHHHHHHAHHSHHQH. 2 stretches are compositionally biased toward low complexity: residues 35 to 46 and 68 to 83; these read SNSNSNASSPHQ and QQQQQQQQQQQQQQQQ. The segment covering 95 to 105 has biased composition (polar residues); it reads PSPSNNDQNSP. A compositionally biased stretch (basic and acidic residues) spans 179 to 198; sequence EPEKEHDLMSNSSEDMKYMA.

It belongs to the hunchback C2H2-type zinc-finger protein family.

It is found in the nucleus. In terms of biological role, gap class segmentation protein that controls development of head structures. The sequence is that of Protein hunchback (hb) from Drosophila disjuncta (Fruit fly).